Reading from the N-terminus, the 294-residue chain is NAD kinase (294 aa).

Catalysis depends on Asp74, which acts as the Proton acceptor. NAD(+)-binding positions include 74-75, 148-149, His159, Arg176, Asp178, 189-194, and Gln249; these read DG, NE, and TAYSLS.

It belongs to the NAD kinase family. The cofactor is a divalent metal cation.

It is found in the cytoplasm. The catalysed reaction is NAD(+) + ATP = ADP + NADP(+) + H(+). In terms of biological role, involved in the regulation of the intracellular balance of NAD and NADP, and is a key enzyme in the biosynthesis of NADP. Catalyzes specifically the phosphorylation on 2'-hydroxyl of the adenosine moiety of NAD to yield NADP. The protein is NAD kinase of Vibrio parahaemolyticus serotype O3:K6 (strain RIMD 2210633).